The sequence spans 499 residues: Ribose import ATP-binding protein RbsA (499 aa).

2 consecutive ABC transporter domains span residues 3 to 240 (VEMT…VGRA) and 250 to 494 (LTPG…TGGD). 35-42 (GENGAGKS) lines the ATP pocket.

Belongs to the ABC transporter superfamily. Ribose importer (TC 3.A.1.2.1) family. The complex is composed of an ATP-binding protein (RbsA), two transmembrane proteins (RbsC) and a solute-binding protein (RbsB).

It localises to the cell membrane. The catalysed reaction is D-ribose(out) + ATP + H2O = D-ribose(in) + ADP + phosphate + H(+). In terms of biological role, part of the ABC transporter complex RbsABC involved in ribose import. Responsible for energy coupling to the transport system. This chain is Ribose import ATP-binding protein RbsA, found in Halalkalibacterium halodurans (strain ATCC BAA-125 / DSM 18197 / FERM 7344 / JCM 9153 / C-125) (Bacillus halodurans).